Reading from the N-terminus, the 529-residue chain is uncharacterized protein (529 aa).

The Arf-GAP domain occupies 13–129 (QTAMRKMRAL…LSTLCQEAQR (117 aa)). Residues 28–51 (CFDCGARNPTWCTVTYGVFLCIDC) form a C4-type zinc finger. Residues 291-301 (QMEAKVAKDPT) are compositionally biased toward basic and acidic residues. Disordered regions lie at residues 291–313 (QMEAKVAKDPTKAASVDRLGMGG), 335–357 (VLTFKKPSQPKEDDDWEVIDDKY), 398–424 (KSRYTASSSSSSTSRAPTTRLTAGASP), and 468–493 (FGSEDLWGNGSQQRQSSQVPDMSDLK). Low complexity predominate over residues 399-420 (SRYTASSSSSSTSRAPTTRLTA). Residues 476–487 (NGSQQRQSSQVP) are compositionally biased toward polar residues.

In terms of biological role, GTPase-activating protein for the ADP ribosylation factor family. This is an uncharacterized protein from Caenorhabditis elegans.